Here is a 243-residue protein sequence, read N- to C-terminus: Probable transcriptional regulatory protein PTH_1024 (243 aa).

The protein belongs to the TACO1 family.

It localises to the cytoplasm. This chain is Probable transcriptional regulatory protein PTH_1024, found in Pelotomaculum thermopropionicum (strain DSM 13744 / JCM 10971 / SI).